Reading from the N-terminus, the 362-residue chain is GDSL esterase/lipase 6 (362 aa).

Positions Met-1 to Ala-23 are cleaved as a signal peptide. The Nucleophile role is filled by Ser-38. Asn-50, Asn-103, Asn-107, Asn-195, and Asn-296 each carry an N-linked (GlcNAc...) asparagine glycan. Catalysis depends on residues Asp-323 and His-326.

This sequence belongs to the 'GDSL' lipolytic enzyme family.

It localises to the secreted. The chain is GDSL esterase/lipase 6 (GLIP6) from Arabidopsis thaliana (Mouse-ear cress).